A 257-amino-acid polypeptide reads, in one-letter code: Diphthine synthase (257 aa).

S-adenosyl-L-methionine is bound by residues Ile11, Asp89, Ile92, 117–118 (SV), Leu169, Leu210, and His235.

This sequence belongs to the diphthine synthase family. As to quaternary structure, homodimer.

The enzyme catalyses 2-[(3S)-amino-3-carboxypropyl]-L-histidyl-[translation elongation factor 2] + 3 S-adenosyl-L-methionine = diphthine-[translation elongation factor 2] + 3 S-adenosyl-L-homocysteine + 3 H(+). It participates in protein modification; peptidyl-diphthamide biosynthesis. S-adenosyl-L-methionine-dependent methyltransferase that catalyzes the trimethylation of the amino group of the modified target histidine residue in translation elongation factor 2 (EF-2), to form an intermediate called diphthine. The three successive methylation reactions represent the second step of diphthamide biosynthesis. The protein is Diphthine synthase of Saccharolobus islandicus (strain L.S.2.15 / Lassen #1) (Sulfolobus islandicus).